The primary structure comprises 396 residues: Tryptophan synthase beta chain (396 aa).

The residue at position 86 (Lys-86) is an N6-(pyridoxal phosphate)lysine.

Belongs to the TrpB family. As to quaternary structure, tetramer of two alpha and two beta chains. The cofactor is pyridoxal 5'-phosphate.

The catalysed reaction is (1S,2R)-1-C-(indol-3-yl)glycerol 3-phosphate + L-serine = D-glyceraldehyde 3-phosphate + L-tryptophan + H2O. Its pathway is amino-acid biosynthesis; L-tryptophan biosynthesis; L-tryptophan from chorismate: step 5/5. In terms of biological role, the beta subunit is responsible for the synthesis of L-tryptophan from indole and L-serine. The polypeptide is Tryptophan synthase beta chain (Blochmanniella pennsylvanica (strain BPEN)).